Consider the following 374-residue polypeptide: Serine/threonine-protein kinase-transforming protein mos (374 aa).

One can recognise a Protein kinase domain in the interval 94–370; that stretch reads VCLMHRLGSG…LLQRDLKAFR (277 aa). ATP is bound by residues 100 to 108 and Lys121; that span reads LGSGGFGSV. Asp229 (proton acceptor) is an active-site residue.

Belongs to the protein kinase superfamily. Ser/Thr protein kinase family.

It carries out the reaction L-seryl-[protein] + ATP = O-phospho-L-seryl-[protein] + ADP + H(+). It catalyses the reaction L-threonyl-[protein] + ATP = O-phospho-L-threonyl-[protein] + ADP + H(+). This is Serine/threonine-protein kinase-transforming protein mos (V-MOS) from Mus musculus (Mouse).